The primary structure comprises 220 residues: Small ribosomal subunit protein mS42 (220 aa).

It belongs to the mitochondrion-specific ribosomal protein mS42 family. As to quaternary structure, component of the mitochondrial small ribosomal subunit (mt-SSU). Mature yeast 74S mitochondrial ribosomes consist of a small (37S) and a large (54S) subunit. The 37S small subunit contains a 15S ribosomal RNA (15S mt-rRNA) and at least 32 different proteins. The 54S large subunit contains a 21S rRNA (21S mt-rRNA) and at least 45 different proteins. mS43 forms a dimer with mS42, building a large protuberance adjacent to the mRNA channel exit in the mt-SSU body.

The protein resides in the mitochondrion. Its function is as follows. Component of the mitochondrial ribosome (mitoribosome), a dedicated translation machinery responsible for the synthesis of mitochondrial genome-encoded proteins, including at least some of the essential transmembrane subunits of the mitochondrial respiratory chain. The mitoribosomes are attached to the mitochondrial inner membrane and translation products are cotranslationally integrated into the membrane. This is Small ribosomal subunit protein mS42 from Schizosaccharomyces pombe (strain 972 / ATCC 24843) (Fission yeast).